Here is a 1683-residue protein sequence, read N- to C-terminus: Genome polyprotein (1683 aa).

The Extracellular portion of the chain corresponds to 1 to 445 (MRCIGISNRD…LHQVFGAIYG (445 aa)). 4 disulfides stabilise this stretch: cysteine 3–cysteine 30, cysteine 60–cysteine 121, cysteine 74–cysteine 105, and cysteine 92–cysteine 116. Asparagine 67 carries an N-linked (GlcNAc...) asparagine; by host glycan. The segment at 98–111 (DRGWGNGCGLFGKG) is fusion peptide. Residue asparagine 153 is glycosylated (N-linked (GlcNAc...) asparagine; by host). 2 disulfides stabilise this stretch: cysteine 185–cysteine 285 and cysteine 302–cysteine 333. The helical transmembrane segment at 446–466 (AAFSGVSWTMKILIGVIITWI) threads the bilayer. Over 467–472 (GMNSRS) the chain is Cytoplasmic. Residues 473–493 (TSLSVSLVLVGIVTLYLGVMV) form a helical membrane-spanning segment. Topologically, residues 494–915 (QADSGCVVSW…MVGATMTDDI (422 aa)) are extracellular. Intrachain disulfides connect cysteine 499-cysteine 510, cysteine 550-cysteine 638, cysteine 674-cysteine 718, cysteine 775-cysteine 824, cysteine 786-cysteine 808, and cysteine 807-cysteine 811. N-linked (GlcNAc...) asparagine; by host glycosylation occurs at asparagine 702. A helical transmembrane segment spans residues 916-940 (GMGVTYLALLAAFRVRPTFAAGLLL). Topologically, residues 941-946 (RKLTSK) are cytoplasmic. Residues 947–965 (ELMMTTIGIVLLSQSSIPE) traverse the membrane as a helical segment. The Lumenal portion of the chain corresponds to 966-989 (TILELTDALALGMMVLKMVRNMEK). Residues 990 to 1010 (YQLAVTIMAILCVPNAVILQN) traverse the membrane as a helical segment. Residue alanine 1011 is a topological domain, cytoplasmic. The chain crosses the membrane as a helical span at residues 1012-1030 (WKVSCTILAVVSVSPLLLT). Over 1031-1037 (SSQQKAD) the chain is Lumenal. The helical transmembrane segment at 1038-1058 (WIPLALTIKGLNPTAIFLTTL) threads the bilayer. The Cytoplasmic portion of the chain corresponds to 1059–1683 (SRTSKKRAGV…EFKEFAAGRK (625 aa)). Positions 1066 to 1243 (AGVLWDVPSP…EKSIEDNPEI (178 aa)) constitute a Peptidase S7 domain. Residues histidine 1116, aspartate 1140, and serine 1200 each act as charge relay system; for serine protease NS3 activity in the active site. Residues 1245-1401 (DDIFRKRRLT…QSNAPIMDEE (157 aa)) enclose the Helicase ATP-binding domain. The important for RNA-binding stretch occupies residues 1249 to 1252 (RKRR). Residue 1258 to 1265 (LHPGAGKT) participates in ATP binding. A DEAH box motif is present at residues 1349-1352 (DEAH). In terms of domain architecture, Helicase C-terminal spans 1411–1582 (SGHEWVTDFK…IFEPEREKVD (172 aa)).

As to quaternary structure, capsid protein C: Homodimer. Interacts (via N-terminus) with host EXOC1 (via C-terminus); this interaction results in EXOC1 degradation through the proteasome degradation pathway. Protein prM: Forms heterodimers with envelope protein E in the endoplasmic reticulum and Golgi. Homodimer; in the endoplasmic reticulum and Golgi. Interacts with protein prM. Interacts with non-structural protein 1. In terms of assembly, homodimer; Homohexamer when secreted. Interacts with envelope protein E. As to quaternary structure, interacts (via N-terminus) with serine protease NS3. Non-structural protein 2B: Forms a heterodimer with serine protease NS3. May form homooligomers. Forms a heterodimer with NS2B. Interacts with NS4B. Interacts with unphosphorylated RNA-directed RNA polymerase NS5; this interaction stimulates RNA-directed RNA polymerase NS5 guanylyltransferase activity. Interacts with host SHFL. Specific enzymatic cleavages in vivo yield mature proteins. Cleavages in the lumen of endoplasmic reticulum are performed by host signal peptidase, wereas cleavages in the cytoplasmic side are performed by the Serine protease NS3. Signal cleavage at the 2K-4B site requires a prior NS3 protease-mediated cleavage at the 4A-2K site. Post-translationally, N-glycosylated. The excreted form is glycosylated and this is required for efficient secretion of the protein from infected cells. In terms of processing, N-glycosylated. Specific enzymatic cleavages in vivo yield mature proteins. Cleavages in the lumen of endoplasmic reticulum are performed by host signal peptidase, wereas cleavages in the cytoplasmic side are performed by serine protease NS3. Signal cleavage at the 2K-4B site requires a prior NS3 protease-mediated cleavage at the 4A-2K site.

The protein resides in the virion membrane. It localises to the host endoplasmic reticulum membrane. Its subcellular location is the secreted. The catalysed reaction is Selective hydrolysis of -Xaa-Xaa-|-Yaa- bonds in which each of the Xaa can be either Arg or Lys and Yaa can be either Ser or Ala.. The enzyme catalyses a ribonucleoside 5'-triphosphate + H2O = a ribonucleoside 5'-diphosphate + phosphate + H(+). It catalyses the reaction ATP + H2O = ADP + phosphate + H(+). Functionally, binds to host cell surface receptor and mediates fusion between viral and cellular membranes. Envelope protein is synthesized in the endoplasmic reticulum in the form of heterodimer with protein prM. They play a role in virion budding in the ER, and the newly formed immature particle is covered with 60 spikes composed of heterodimer between precursor prM and envelope protein E. The virion is transported to the Golgi apparatus where the low pH causes dissociation of PrM-E heterodimers and formation of E homodimers. prM-E cleavage is inefficient, and many virions are only partially matured. These uncleaved prM would play a role in immune evasion. In terms of biological role, involved in immune evasion, pathogenesis and viral replication. Once cleaved off the polyprotein, is targeted to three destinations: the viral replication cycle, the plasma membrane and the extracellular compartment. Essential for viral replication. Required for formation of the replication complex and recruitment of other non-structural proteins to the ER-derived membrane structures. Excreted as a hexameric lipoparticle that plays a role against host immune response. Antagonizing the complement function. Binds to the host macrophages and dendritic cells. Inhibits signal transduction originating from Toll-like receptor 3 (TLR3). Its function is as follows. Disrupts the host endothelial glycocalyx layer of host pulmonary microvascular endothelial cells, inducing degradation of sialic acid and shedding of heparan sulfate proteoglycans. NS1 induces expression of sialidases, heparanase, and activates cathepsin L, which activates heparanase via enzymatic cleavage. These effects are probably linked to the endothelial hyperpermeability observed in severe dengue disease. Component of the viral RNA replication complex that functions in virion assembly and antagonizes the host immune response. Functionally, serine protease subunit NS2B: Required cofactor for the serine protease function of NS3. May have membrane-destabilizing activity and form viroporins. In terms of biological role, displays three enzymatic activities: serine protease, NTPase and RNA helicase. NS3 serine protease, in association with NS2B, performs its autocleavage and cleaves the polyprotein at dibasic sites in the cytoplasm: C-prM, NS2A-NS2B, NS2B-NS3, NS3-NS4A, NS4A-2K and NS4B-NS5. NS3 RNA helicase binds RNA and unwinds dsRNA in the 3' to 5' direction. The protein is Genome polyprotein of Aedimorphus (Red guenon).